The chain runs to 405 residues: Argininosuccinate synthase (405 aa).

ATP contacts are provided by residues 13–21 and A40; that span reads AYSGGLDTS. L-citrulline contacts are provided by Y91 and S96. An ATP-binding site is contributed by G121. L-aspartate contacts are provided by T123, N127, and D128. N127 serves as a coordination point for L-citrulline. L-citrulline is bound by residues R131, S182, S191, E267, and Y279.

The protein belongs to the argininosuccinate synthase family. Type 1 subfamily. As to quaternary structure, homotetramer.

Its subcellular location is the cytoplasm. It carries out the reaction L-citrulline + L-aspartate + ATP = 2-(N(omega)-L-arginino)succinate + AMP + diphosphate + H(+). Its pathway is amino-acid biosynthesis; L-arginine biosynthesis; L-arginine from L-ornithine and carbamoyl phosphate: step 2/3. This is Argininosuccinate synthase from Rhizobium meliloti (strain 1021) (Ensifer meliloti).